Reading from the N-terminus, the 349-residue chain is UDP-N-acetylenolpyruvoylglucosamine reductase (349 aa).

One can recognise an FAD-binding PCMH-type domain in the interval 25 to 197 (GIAARARFAA…VAVTFRLPKQ (173 aa)). Arg173 is an active-site residue. Catalysis depends on Ser249, which acts as the Proton donor. Residue Glu345 is part of the active site.

This sequence belongs to the MurB family. It depends on FAD as a cofactor.

The protein localises to the cytoplasm. The catalysed reaction is UDP-N-acetyl-alpha-D-muramate + NADP(+) = UDP-N-acetyl-3-O-(1-carboxyvinyl)-alpha-D-glucosamine + NADPH + H(+). It functions in the pathway cell wall biogenesis; peptidoglycan biosynthesis. Its function is as follows. Cell wall formation. In Burkholderia orbicola (strain MC0-3), this protein is UDP-N-acetylenolpyruvoylglucosamine reductase.